We begin with the raw amino-acid sequence, 126 residues long: Flagellar assembly factor FliW (126 aa).

Belongs to the FliW family. In terms of assembly, interacts with translational regulator CsrA and flagellin(s).

It localises to the cytoplasm. Functionally, acts as an anti-CsrA protein, binds CsrA and prevents it from repressing translation of its target genes, one of which is flagellin. Binds to flagellin and participates in the assembly of the flagellum. In Sulfurimonas denitrificans (strain ATCC 33889 / DSM 1251) (Thiomicrospira denitrificans (strain ATCC 33889 / DSM 1251)), this protein is Flagellar assembly factor FliW.